The following is a 287-amino-acid chain: MPYTKKKPIIIVDGSLYLYRSYFTFQNFNSNEENPSGAIYGMLKTIQNILNKNYNSKKIIIIFDSSKKNFRNTIFKEYKSNRSAMPNKLYVQIQPLFKILEEIGIKTLSILGIEADDIIGSLAYKLEQKGEQVLIVSHDKDMIQLITDNINVLNISKNSILTPEKIQEKYGIYPKEFIDLLALMGDSSDNIPGVPKIGIKTALFLLKKFSNIKNIYNNIEKIQSLPFRNAKNAAIQLKNYKKTAFLSYQLAKIKLDVPINITSEEITLKKTCFKKLSNLIRWYSFNE.

The 5'-3' exonuclease domain maps to 172-270 (IYPKEFIDLL…ITSEEITLKK (99 aa)).

Functionally, 5'-3' exonuclease acting preferentially on double-stranded DNA. This Buchnera aphidicola subsp. Schizaphis graminum (strain Sg) protein is 5'-3' exonuclease (pol).